A 268-amino-acid chain; its full sequence is Tryptophan synthase alpha chain (268 aa).

Catalysis depends on proton acceptor residues Glu-49 and Asp-60.

This sequence belongs to the TrpA family. As to quaternary structure, tetramer of two alpha and two beta chains.

It catalyses the reaction (1S,2R)-1-C-(indol-3-yl)glycerol 3-phosphate + L-serine = D-glyceraldehyde 3-phosphate + L-tryptophan + H2O. It functions in the pathway amino-acid biosynthesis; L-tryptophan biosynthesis; L-tryptophan from chorismate: step 5/5. Its function is as follows. The alpha subunit is responsible for the aldol cleavage of indoleglycerol phosphate to indole and glyceraldehyde 3-phosphate. The polypeptide is Tryptophan synthase alpha chain (Escherichia coli (strain 55989 / EAEC)).